Here is a 144-residue protein sequence, read N- to C-terminus: Large ribosomal subunit protein uL13 (144 aa).

This sequence belongs to the universal ribosomal protein uL13 family. As to quaternary structure, part of the 50S ribosomal subunit.

This protein is one of the early assembly proteins of the 50S ribosomal subunit, although it is not seen to bind rRNA by itself. It is important during the early stages of 50S assembly. The protein is Large ribosomal subunit protein uL13 of Ruminiclostridium cellulolyticum (strain ATCC 35319 / DSM 5812 / JCM 6584 / H10) (Clostridium cellulolyticum).